The chain runs to 1129 residues: Regulator of nonsense transcripts 1 (1129 aa).

Positions 1–415 (MSVEAYGPSS…LRSSVGAPVE (415 aa)) are sufficient for interaction with RENT2. Phosphoserine occurs at positions 10 and 31. The segment at 39–70 (TLPSQTQTPPGGPGGPGGGGAGGPGGAGAGAA) is disordered. The segment covering 52–69 (GGPGGGGAGGPGGAGAGA) has biased composition (gly residues). In terms of domain architecture, Upf1 CH-rich spans 115–272 (TKDLPIHACS…NKLEELWKEN (158 aa)). The Zn(2+) site is built by Cys123, Cys126, Cys137, Ser140, Cys145, His155, His159, Cys165, Cys183, Cys186, Cys209, and Cys213. The interval 123–155 (CSYCGIHDPACVVYCNTSKKWFCNGRGNTSGSH) is C3H. Residues 137-165 (CNTSKKWFCNGRGNTSGSHIVNHLVRAKC) are CC/SHH/C. The interval 183-213 (CYNCGCRNVFLLGFIPAKADSVVVLLCRQPC) is C4. ATP contacts are provided by residues Gln486 and 506–510 (GTGKT). Phosphoserine is present on Ser565. ATP is bound by residues Gln676, Tyr713, and Glu844. A Phosphoserine modification is found at Ser956. Disordered regions lie at residues 1009–1058 (FGQA…VASQ) and 1073–1096 (SQPS…YLGD). Arg1019 bears the Omega-N-methylarginine mark. Residues 1025 to 1034 (KTGRGGRQKN) show a composition bias toward basic residues. Over residues 1041-1058 (PSQTNLPNSQASQDVASQ) the composition is skewed to polar residues. Over residues 1073-1086 (SQPSQMSQPGLSQP) the composition is skewed to low complexity. 4 positions are modified to phosphoserine: Ser1089, Ser1107, Ser1110, and Ser1127. 2 short sequence motifs ([ST]-Q motif) span residues 1089-1090 (SQ) and 1107-1108 (SQ). The interval 1110 to 1129 (STYQGERAYQHGGVTGLSQY) is disordered.

This sequence belongs to the DNA2/NAM7 helicase family. As to quaternary structure, found in a post-splicing messenger ribonucleoprotein (mRNP) complex. Associates with the exon junction complex (EJC). Associates with the SGM1C complex; is phosphorylated by the complex kinase component SGM1. Part of a complex composed of SMG1, DHX34 and UPF1; within the complex DHX34 acts as a scaffolding protein to facilitate SMG1 phosphorylation of UPF1. Interacts with UPF2. Interacts with UPF3A and UPF3B. Interacts with EST1A. Interacts with SLBP. Interacts (when hyperphosphorylated) with PNRC2. Interacts with AGO1 and AGO2. Interacts with GSPT2. Interacts with isoform 1 and isoform 5 of ADAR/ADAR1. Interacts with SMG7. Interacts with ZC3H12A; this interaction occurs in a mRNA translationally active- and termination-dependent manner and is essential for ZC3H12A-mediated degradation of target mRNAs. Interacts with CPSF6. Interacts with MOV10; the interaction is direct and RNA-dependent. Interacts with SHFL; the interaction increases in the presence of RNA. Interacts with UPF2 and DDX4; interactions are mediated by TDRD6. Interacts with DHX34 and PABPC1/PABP1; the interactions are RNA-independent. Interacts with RBM46. (Microbial infection) Interacts with human T-cell leukemia virus 1/HTLV-1 protein Tax; this interaction inhibits the host nonsense-mediated mRNA decay (NMD). Phosphorylated by SMG1; required for formation of mRNA surveillance complexes. In terms of tissue distribution, ubiquitous.

Its subcellular location is the cytoplasm. The protein localises to the P-body. The protein resides in the nucleus. It localises to the perinuclear region. It carries out the reaction ATP + H2O = ADP + phosphate + H(+). Functionally, RNA-dependent helicase required for nonsense-mediated decay (NMD) of aberrant mRNAs containing premature stop codons and modulates the expression level of normal mRNAs. Is recruited to mRNAs upon translation termination and undergoes a cycle of phosphorylation and dephosphorylation; its phosphorylation appears to be a key step in NMD. Recruited by release factors to stalled ribosomes together with the SMG1C protein kinase complex to form the transient SURF (SMG1-UPF1-eRF1-eRF3) complex. In EJC-dependent NMD, the SURF complex associates with the exon junction complex (EJC) (located 50-55 or more nucleotides downstream from the termination codon) through UPF2 and allows the formation of an UPF1-UPF2-UPF3 surveillance complex which is believed to activate NMD. Phosphorylated UPF1 is recognized by EST1B/SMG5, SMG6 and SMG7 which are thought to provide a link to the mRNA degradation machinery involving exonucleolytic and endonucleolytic pathways, and to serve as adapters to protein phosphatase 2A (PP2A), thereby triggering UPF1 dephosphorylation and allowing the recycling of NMD factors. UPF1 can also activate NMD without UPF2 or UPF3, and in the absence of the NMD-enhancing downstream EJC indicative for alternative NMD pathways. Plays a role in replication-dependent histone mRNA degradation at the end of phase S; the function is independent of UPF2. For the recognition of premature termination codons (PTC) and initiation of NMD a competitive interaction between UPF1 and PABPC1 with the ribosome-bound release factors is proposed. The ATPase activity of UPF1 is required for disassembly of mRNPs undergoing NMD. Together with UPF2 and dependent on TDRD6, mediates the degradation of mRNA harboring long 3'UTR by inducing the NMD machinery. Also capable of unwinding double-stranded DNA and translocating on single-stranded DNA. This is Regulator of nonsense transcripts 1 from Homo sapiens (Human).